A 225-amino-acid polypeptide reads, in one-letter code: Cytidylate kinase (225 aa).

An ATP-binding site is contributed by Gly-11–Thr-19.

This sequence belongs to the cytidylate kinase family. Type 1 subfamily.

The protein resides in the cytoplasm. It catalyses the reaction CMP + ATP = CDP + ADP. It carries out the reaction dCMP + ATP = dCDP + ADP. The protein is Cytidylate kinase of Anoxybacillus flavithermus (strain DSM 21510 / WK1).